Consider the following 90-residue polypeptide: Auxin-responsive protein SAUR24 (90 aa).

Belongs to the ARG7 family.

It localises to the cell membrane. Its function is as follows. Functions as a positive effector of cell expansion through modulation of auxin transport. This chain is Auxin-responsive protein SAUR24, found in Arabidopsis thaliana (Mouse-ear cress).